The primary structure comprises 160 residues: SsrA-binding protein (160 aa).

Belongs to the SmpB family.

It is found in the cytoplasm. Its function is as follows. Required for rescue of stalled ribosomes mediated by trans-translation. Binds to transfer-messenger RNA (tmRNA), required for stable association of tmRNA with ribosomes. tmRNA and SmpB together mimic tRNA shape, replacing the anticodon stem-loop with SmpB. tmRNA is encoded by the ssrA gene; the 2 termini fold to resemble tRNA(Ala) and it encodes a 'tag peptide', a short internal open reading frame. During trans-translation Ala-aminoacylated tmRNA acts like a tRNA, entering the A-site of stalled ribosomes, displacing the stalled mRNA. The ribosome then switches to translate the ORF on the tmRNA; the nascent peptide is terminated with the 'tag peptide' encoded by the tmRNA and targeted for degradation. The ribosome is freed to recommence translation, which seems to be the essential function of trans-translation. The protein is SsrA-binding protein of Dinoroseobacter shibae (strain DSM 16493 / NCIMB 14021 / DFL 12).